A 551-amino-acid chain; its full sequence is Chaperonin GroEL (551 aa).

Residues 29 to 32, lysine 50, 86 to 90, glycine 417, and aspartate 499 contribute to the ATP site; these read TAGP and DGTTT.

Belongs to the chaperonin (HSP60) family. As to quaternary structure, forms a cylinder of 14 subunits composed of two heptameric rings stacked back-to-back. Interacts with the co-chaperonin GroES.

Its subcellular location is the cytoplasm. The enzyme catalyses ATP + H2O + a folded polypeptide = ADP + phosphate + an unfolded polypeptide.. Its function is as follows. Together with its co-chaperonin GroES, plays an essential role in assisting protein folding. The GroEL-GroES system forms a nano-cage that allows encapsulation of the non-native substrate proteins and provides a physical environment optimized to promote and accelerate protein folding. This is Chaperonin GroEL from Ehrlichia ruminantium (strain Gardel).